The following is a 548-amino-acid chain: 1,3-beta-glucanosyltransferase gel4 (548 aa).

The first 25 residues, 1-25, serve as a signal peptide directing secretion; sequence MKFVYAAAGASLVGSALATLPVIEA. Asn51 and Asn69 each carry an N-linked (GlcNAc...) asparagine glycan. A disulfide bridge links Cys88 with Cys117. (1,3-beta-D-glucosyl)n-binding positions include Tyr106, 133-141, Asn174, and Glu175; that span reads SAPSESINR. The active-site Proton donor is the Glu175. N-linked (GlcNAc...) asparagine glycosylation is present at Asn181. Asp217 and Arg222 together coordinate (1,3-beta-D-glucosyl)n. Disulfide bonds link Cys231-Cys364, Cys249-Cys280, Cys386-Cys437, Cys395-Cys461, and Cys414-Cys419. The Nucleophile role is filled by Glu277. Residue Tyr309 coordinates (1,3-beta-D-glucosyl)n. The N-linked (GlcNAc...) asparagine glycan is linked to Asn425. Ala519 carries the GPI-like-anchor amidated alanine lipid modification. A propeptide spans 520–548 (removed in mature form); it reads SPMAVKVGNWQFGAYIATALFAGVGMLVL.

Belongs to the glycosyl hydrolase 72 family. The GPI-like anchor contains a phosphoceramide lipid group.

It localises to the cell membrane. Splits internally a 1,3-beta-glucan molecule and transfers the newly generated reducing end (the donor) to the non-reducing end of another 1,3-beta-glucan molecule (the acceptor) forming a 1,3-beta linkage, resulting in the elongation of 1,3-beta-glucan chains in the cell wall. Involved in cell wall morphogenesis. The protein is 1,3-beta-glucanosyltransferase gel4 (gel4) of Aspergillus fumigatus (strain ATCC MYA-4609 / CBS 101355 / FGSC A1100 / Af293) (Neosartorya fumigata).